Consider the following 313-residue polypeptide: Small ribosomal subunit biogenesis GTPase RsgA (313 aa).

The CP-type G domain occupies 80–237 (KVALRQVIVS…LIDTPGIKEF (158 aa)). Residues 129 to 132 (NKVD) and 180 to 188 (GQSGVGKSS) contribute to the GTP site. The Zn(2+) site is built by C261, C266, H268, and C274.

It belongs to the TRAFAC class YlqF/YawG GTPase family. RsgA subfamily. In terms of assembly, monomer. Associates with 30S ribosomal subunit, binds 16S rRNA. It depends on Zn(2+) as a cofactor.

It is found in the cytoplasm. Functionally, one of several proteins that assist in the late maturation steps of the functional core of the 30S ribosomal subunit. Helps release RbfA from mature subunits. May play a role in the assembly of ribosomal proteins into the subunit. Circularly permuted GTPase that catalyzes slow GTP hydrolysis, GTPase activity is stimulated by the 30S ribosomal subunit. The chain is Small ribosomal subunit biogenesis GTPase RsgA from Borrelia recurrentis (strain A1).